Here is a 104-residue protein sequence, read N- to C-terminus: Large ribosomal subunit protein uL23 (104 aa).

This sequence belongs to the universal ribosomal protein uL23 family. Part of the 50S ribosomal subunit. Contacts protein L29, and trigger factor when it is bound to the ribosome.

Functionally, one of the early assembly proteins it binds 23S rRNA. One of the proteins that surrounds the polypeptide exit tunnel on the outside of the ribosome. Forms the main docking site for trigger factor binding to the ribosome. The chain is Large ribosomal subunit protein uL23 from Polynucleobacter necessarius subsp. necessarius (strain STIR1).